The primary structure comprises 219 residues: Ribonuclease HII (219 aa).

Positions 10 to 219 constitute an RNase H type-2 domain; sequence HLEAGTDEAG…LLPEQTVLDL (210 aa). A divalent metal cation-binding residues include D16, E17, and D108.

It belongs to the RNase HII family. Mn(2+) is required as a cofactor. The cofactor is Mg(2+).

It is found in the cytoplasm. It carries out the reaction Endonucleolytic cleavage to 5'-phosphomonoester.. Its function is as follows. Endonuclease that specifically degrades the RNA of RNA-DNA hybrids. The polypeptide is Ribonuclease HII (Flavobacterium psychrophilum (strain ATCC 49511 / DSM 21280 / CIP 103535 / JIP02/86)).